The chain runs to 227 residues: Protein PhlB (227 aa).

A signal peptide spans 1–35 (MPEGRRLRRALAIALLALVAVTGLLMMAKEQQMGQ). 4 ANK repeats span residues 75 to 104 (RQVTLLQWAVLSQQPDSVQALLDLGADPAA), 108 to 137 (DGNSALHTAAMLQDAQYLRLLLAEGAQMNV), 142 to 171 (TGATPLAAAVLAGREEQLRLLLAAGADTTL), and 175 to 204 (LGDTPLHLAAKINRRTWRCCCCRPGPMPGR).

Cell-protective protein that neutralizes the intracellular lysis capacity of phospholipase A1 through a direct interaction with the enzyme. The protein is Protein PhlB (phlB) of Serratia liquefaciens.